The sequence spans 249 residues: Tabinhibitin 4 (249 aa).

A signal peptide spans 1 to 23 (MTLNVYFVLLSPYSLQSVPLPLT). The short motif at 31 to 33 (RGD) is the Cell attachment site element. One can recognise an SCP domain in the interval 64–207 (LQKTNWLRGV…LKRALFTCNF (144 aa)). The Cell attachment site signature appears at 220–222 (RGD).

It belongs to the CRISP family. As to expression, expressed in salivary glands.

The protein resides in the secreted. Inhibits platelet aggregation induced by all agonists tested (ADP, arachidonic acid, the thromboxane A2 analog U46619, thrombin, and snake venom snaclecs (TMVA that activates platelet through GPIB, and stejnulxin that specifically acts through GPVI (GP6))). May act by competing with fibrinogen for binding to glycoprotein IIb/IIIa (ITGA2B/ITGB3). The sequence is that of Tabinhibitin 4 from Tabanus yao (Horsefly).